Reading from the N-terminus, the 357-residue chain is Dynein axonemal assembly factor 10 (357 aa).

WD repeat units lie at residues 63-105 (EKAK…MPVY), 115-154 (NAID…DPVA), 162-205 (ENKR…LRWE), 207-249 (NIKN…PTKG), 257-297 (AHKS…QRSK), and 319-357 (LSTQ…LNKI).

Component of the PAQosome complex which is responsible for the biogenesis of several protein complexes and which consists of R2TP complex members RUVBL1, RUVBL2, RPAP3 and PIH1D1, URI complex members PFDN2, PFDN6, PDRG1, UXT and URI1 as well as ASDURF, POLR2E and DNAAF10/WDR92. Interacts with PIH1D1; the interaction associates DNAAF10 with the R2TP complex. Interacts with several dynein axonemal assembly factors. Widely expressed with the highest expression in testis.

Its subcellular location is the dynein axonemal particle. Its function is as follows. Key assembly factor specifically required for the stability of axonemal dynein heavy chains in cytoplasm. The chain is Dynein axonemal assembly factor 10 from Homo sapiens (Human).